The chain runs to 705 residues: Elongation factor G (705 aa).

Residues 8-294 (NLYRNFGIMA…AVIDYLPSPL (287 aa)) form the tr-type G domain. Residues 17 to 24 (AHIDAGKT), 92 to 96 (DTPGH), and 146 to 149 (NKMD) contribute to the GTP site.

It belongs to the TRAFAC class translation factor GTPase superfamily. Classic translation factor GTPase family. EF-G/EF-2 subfamily.

It localises to the cytoplasm. Functionally, catalyzes the GTP-dependent ribosomal translocation step during translation elongation. During this step, the ribosome changes from the pre-translocational (PRE) to the post-translocational (POST) state as the newly formed A-site-bound peptidyl-tRNA and P-site-bound deacylated tRNA move to the P and E sites, respectively. Catalyzes the coordinated movement of the two tRNA molecules, the mRNA and conformational changes in the ribosome. The protein is Elongation factor G of Ruegeria pomeroyi (strain ATCC 700808 / DSM 15171 / DSS-3) (Silicibacter pomeroyi).